We begin with the raw amino-acid sequence, 340 residues long: Uroporphyrinogen decarboxylase (340 aa).

Residues 21–25 (RQAGR), Phe-40, Asp-71, Tyr-146, Ser-201, and His-316 contribute to the substrate site.

It belongs to the uroporphyrinogen decarboxylase family. As to quaternary structure, homodimer.

The protein resides in the cytoplasm. It catalyses the reaction uroporphyrinogen III + 4 H(+) = coproporphyrinogen III + 4 CO2. It functions in the pathway porphyrin-containing compound metabolism; protoporphyrin-IX biosynthesis; coproporphyrinogen-III from 5-aminolevulinate: step 4/4. Functionally, catalyzes the decarboxylation of four acetate groups of uroporphyrinogen-III to yield coproporphyrinogen-III. The protein is Uroporphyrinogen decarboxylase of Rickettsia bellii (strain RML369-C).